A 295-amino-acid polypeptide reads, in one-letter code: G1/S-specific cyclin-D1 (295 aa).

The Cyclin N-terminal domain maps to 28–152 (LRAMLKTEET…LLVNKLKWNL (125 aa)). The disordered stretch occupies residues 262–283 (AQQNVDPKATEEEGEVEEEAGL). K269 participates in a covalent cross-link: Glycyl lysine isopeptide (Lys-Gly) (interchain with G-Cter in ubiquitin). At T286 the chain carries Phosphothreonine.

The protein belongs to the cyclin family. Cyclin D subfamily. As to quaternary structure, interacts with either CDK4 or CDK6 protein kinase to form a serine/threonine kinase holoenzyme complex. The cyclin subunit imparts substrate specificity to the complex. Component of the ternary complex CCND1/CDK4/CDKN1B required for nuclear translocation and modulation of CDK4-mediated kinase activity. Interacts directly with CDKN1B. Can form similar complexes with either CDKN1A or CDKN2A. Interacts with UHRF2; the interaction ubiquitinates CCND1 and appears to occur independently of phosphorylation. Interacts with USP2. Interacts (via cyclin N-terminal domain) with INSM1 (via N-terminal region); the interaction competes with the binding of CCND1 to CDK4 during cell cycle progression and inhibits CDK4 activity. Interacts with CDK4; the interaction is prevented with the binding of CCND1 to INSM1 during cell cycle progression. In terms of processing, phosphorylation at Thr-286 by MAP kinases is required for ubiquitination and degradation by the DCX(AMBRA1) complex. It also plays an essential role for recognition by the FBXO31 component of SCF (SKP1-cullin-F-box) protein ligase complex following DNA damage. Ubiquitinated at Lys-269 by the DCX(AMBRA1) complex during the transition from G1 to S cell phase, leading to its degradation: ubiquitination is dependent on Thr-286 phosphorylation. The DCX(AMBRA1) complex represents the major regulator of CCND1 stability during the G1/S transition. Also ubiquitinated by the SCF(FBXO4) and Cul7-RING(FBXW8) ubiquitin-protein ligase complexes. Following DNA damage it is ubiquitinated by the SCF(FBXO31) protein ligase complex. SCF(FBXO31) ubiquitination is dependent on Thr-286 phosphorylation. Ubiquitinated also by UHRF2 apparently in a phosphorylation-independent manner. Ubiquitination leads to its degradation and G1 arrest. Deubiquitinated by USP2; leading to its stabilization. In terms of tissue distribution, expressed in the intestinal epithelium.

The protein resides in the nucleus. It is found in the cytoplasm. It localises to the nucleus membrane. In terms of biological role, regulatory component of the cyclin D1-CDK4 (DC) complex that phosphorylates and inhibits members of the retinoblastoma (RB) protein family including RB1 and regulates the cell-cycle during G(1)/S transition. Phosphorylation of RB1 allows dissociation of the transcription factor E2F from the RB/E2F complex and the subsequent transcription of E2F target genes which are responsible for the progression through the G(1) phase. Hypophosphorylates RB1 in early G(1) phase. Cyclin D-CDK4 complexes are major integrators of various mitogenenic and antimitogenic signals. Also a substrate for SMAD3, phosphorylating SMAD3 in a cell-cycle-dependent manner and repressing its transcriptional activity. Component of the ternary complex, cyclin D1/CDK4/CDKN1B, required for nuclear translocation and activity of the cyclin D-CDK4 complex. Exhibits transcriptional corepressor activity with INSM1 on the NEUROD1 and INS promoters in a cell cycle-independent manner. The polypeptide is G1/S-specific cyclin-D1 (Ccnd1) (Mus musculus (Mouse)).